The primary structure comprises 617 residues: Proline--tRNA ligase (617 aa).

The protein belongs to the class-II aminoacyl-tRNA synthetase family. ProS type 1 subfamily. In terms of assembly, homodimer.

It localises to the cytoplasm. It carries out the reaction tRNA(Pro) + L-proline + ATP = L-prolyl-tRNA(Pro) + AMP + diphosphate. Its function is as follows. Catalyzes the attachment of proline to tRNA(Pro) in a two-step reaction: proline is first activated by ATP to form Pro-AMP and then transferred to the acceptor end of tRNA(Pro). As ProRS can inadvertently accommodate and process non-cognate amino acids such as alanine and cysteine, to avoid such errors it has two additional distinct editing activities against alanine. One activity is designated as 'pretransfer' editing and involves the tRNA(Pro)-independent hydrolysis of activated Ala-AMP. The other activity is designated 'posttransfer' editing and involves deacylation of mischarged Ala-tRNA(Pro). The misacylated Cys-tRNA(Pro) is not edited by ProRS. The polypeptide is Proline--tRNA ligase (Streptococcus agalactiae serotype III (strain NEM316)).